Reading from the N-terminus, the 385-residue chain is Eukaryotic translation initiation factor 3 subunit M (385 aa).

Residues 180–342 enclose the PCI domain; the sequence is NSELASKVMI…RKVHISSTMH (163 aa).

The protein belongs to the eIF-3 subunit M family. As to quaternary structure, component of the eukaryotic translation initiation factor 3 (eIF-3) complex.

It is found in the cytoplasm. Functionally, component of the eukaryotic translation initiation factor 3 (eIF-3) complex, which is involved in protein synthesis of a specialized repertoire of mRNAs and, together with other initiation factors, stimulates binding of mRNA and methionyl-tRNAi to the 40S ribosome. The eIF-3 complex specifically targets and initiates translation of a subset of mRNAs involved in cell proliferation. The sequence is that of Eukaryotic translation initiation factor 3 subunit M from Anopheles gambiae (African malaria mosquito).